The chain runs to 201 residues: UPF0301 protein CE2927 (201 aa).

It belongs to the UPF0301 (AlgH) family.

The sequence is that of UPF0301 protein CE2927 from Corynebacterium efficiens (strain DSM 44549 / YS-314 / AJ 12310 / JCM 11189 / NBRC 100395).